We begin with the raw amino-acid sequence, 91 residues long: Small ribosomal subunit protein uS15 (91 aa).

It belongs to the universal ribosomal protein uS15 family. In terms of assembly, part of the 30S ribosomal subunit. Forms a bridge to the 50S subunit in the 70S ribosome, contacting the 23S rRNA.

One of the primary rRNA binding proteins, it binds directly to 16S rRNA where it helps nucleate assembly of the platform of the 30S subunit by binding and bridging several RNA helices of the 16S rRNA. Its function is as follows. Forms an intersubunit bridge (bridge B4) with the 23S rRNA of the 50S subunit in the ribosome. The protein is Small ribosomal subunit protein uS15 of Cytophaga hutchinsonii (strain ATCC 33406 / DSM 1761 / CIP 103989 / NBRC 15051 / NCIMB 9469 / D465).